A 102-amino-acid chain; its full sequence is Exocrine gland-secreted peptide 1 (102 aa).

Residues 1-22 (MTSLPVLLFLIILLLPSMITEG) form the signal peptide. A disulfide bridge connects residues Cys63 and Cys95.

This sequence belongs to the exocrine gland-secreted peptide family. As to quaternary structure, monomer. Expressed in the extraorbital lacrimal gland from where it is secreted into tears.

The protein resides in the secreted. Male-specific phermone which is recognized by the Vmn2r116/V2rp5 receptor in the vomeronasal organ (VNO) and enhances female sexual receptive behavior (lordosis) upon male mounting, resulting in successful copulation. The polypeptide is Exocrine gland-secreted peptide 1 (Mus musculus (Mouse)).